The chain runs to 238 residues: Orotidine 5'-phosphate decarboxylase (238 aa).

Substrate-binding positions include Asp-18, Lys-40, 67–76, Thr-122, Arg-183, Gln-192, and Arg-213; that span reads DMKLLDIDNT. The active-site Proton donor is the Lys-69.

It belongs to the OMP decarboxylase family. Type 1 subfamily. Homodimer.

The enzyme catalyses orotidine 5'-phosphate + H(+) = UMP + CO2. Its pathway is pyrimidine metabolism; UMP biosynthesis via de novo pathway; UMP from orotate: step 2/2. Its function is as follows. Catalyzes the decarboxylation of orotidine 5'-monophosphate (OMP) to uridine 5'-monophosphate (UMP). This chain is Orotidine 5'-phosphate decarboxylase, found in Brucella abortus (strain S19).